Reading from the N-terminus, the 297-residue chain is Protease HtpX homolog (297 aa).

Residues 16–36 (IFMAIGFLVGGMAGMILAFVV) form a helical membrane-spanning segment. H134 is a Zn(2+) binding site. E135 is a catalytic residue. Zn(2+) is bound at residue H138. 2 helical membrane-spanning segments follow: residues 147-167 (MTVT…ALFF) and 175-195 (IGSI…QMAI). E200 contributes to the Zn(2+) binding site.

It belongs to the peptidase M48B family. The cofactor is Zn(2+).

It is found in the cell inner membrane. In Hyphomonas neptunium (strain ATCC 15444), this protein is Protease HtpX homolog.